The following is a 155-amino-acid chain: Endoribonuclease YbeY (155 aa).

Zn(2+) contacts are provided by His-114, His-118, and His-124.

Belongs to the endoribonuclease YbeY family. The cofactor is Zn(2+).

It localises to the cytoplasm. Single strand-specific metallo-endoribonuclease involved in late-stage 70S ribosome quality control and in maturation of the 3' terminus of the 16S rRNA. In Shigella flexneri serotype 5b (strain 8401), this protein is Endoribonuclease YbeY.